A 231-amino-acid chain; its full sequence is MQDVLLQVQAVSKSYHDGDVTTQVLTEVDLQVFKGEQLAIVGTSGSGKSTLLHIMGTLDKPSAGKVLLAGEDLYQVSSARQAQIRNQDLGFIYQFHHLLPEFSALENVAMPAFIQGRDRTQAQADAKVLLERVGLGHRMSHIPAELSGGERQRVAIARALINKPKLVLADEPTGNLDAKSGEAVYELIRELANQLGTAFVVVTHDPKLAARMDRQLTMKNGYLQAVAEHAQ.

In terms of domain architecture, ABC transporter spans 6 to 231 (LQVQAVSKSY…YLQAVAEHAQ (226 aa)). Residue 42 to 49 (GTSGSGKS) coordinates ATP.

The protein belongs to the ABC transporter superfamily. Lipoprotein translocase (TC 3.A.1.125) family. The complex is composed of two ATP-binding proteins (LolD) and two transmembrane proteins (LolC and LolE).

It is found in the cell inner membrane. In terms of biological role, part of the ABC transporter complex LolCDE involved in the translocation of mature outer membrane-directed lipoproteins, from the inner membrane to the periplasmic chaperone, LolA. Responsible for the formation of the LolA-lipoprotein complex in an ATP-dependent manner. In Shewanella sp. (strain MR-7), this protein is Lipoprotein-releasing system ATP-binding protein LolD.